We begin with the raw amino-acid sequence, 89 residues long: Bombyxin B-2 (89 aa).

The signal sequence occupies residues methionine 1–serine 19. 3 disulfides stabilise this stretch: cysteine 29–cysteine 75, cysteine 41–cysteine 88, and cysteine 74–cysteine 79. Residues serine 48 to glycine 66 constitute a propeptide, c peptide like.

The protein belongs to the insulin family. As to quaternary structure, heterodimer of a B chain and an A chain linked by two disulfide bonds.

The protein resides in the secreted. Functionally, brain peptide responsible for activation of prothoracic glands to produce ecdysone in insects. This is Bombyxin B-2 (BBXB2) from Bombyx mori (Silk moth).